The following is a 463-amino-acid chain: Probable glucan endo-1,3-beta-glucosidase eglC (463 aa).

Residues 1-18 form the signal peptide; that stretch reads MQLTHLLAFALSLATSEA. Asparagine 84 carries N-linked (GlcNAc...) asparagine glycosylation. The active-site Proton donor is the glutamate 128. N-linked (GlcNAc...) asparagine glycosylation occurs at asparagine 183. The active-site Nucleophile is the glutamate 239. An N-linked (GlcNAc...) asparagine glycan is attached at asparagine 312. Disordered stretches follow at residues 317–354 and 396–430; these read SASA…SSAV and SGSS…NSGA. Residue glycine 440 is the site of GPI-anchor amidated glycine attachment. The propeptide at 441–463 is removed in mature form; sequence GASSVSGSVFGALVAVFAFVATL.

The protein belongs to the glycosyl hydrolase 17 family. Post-translationally, the GPI-anchor is attached to the protein in the endoplasmic reticulum and serves to target the protein to the cell surface. There, the glucosamine-inositol phospholipid moiety is cleaved off and the GPI-modified mannoprotein is covalently attached via its lipidless GPI glycan remnant to the 1,6-beta-glucan of the outer cell wall layer.

The protein resides in the cell membrane. The protein localises to the secreted. Its subcellular location is the cell wall. The enzyme catalyses Hydrolysis of (1-&gt;3)-beta-D-glucosidic linkages in (1-&gt;3)-beta-D-glucans.. Its function is as follows. Glucanases play a role in cell expansion during growth, in cell-cell fusion during mating, and in spore release during sporulation. This enzyme may be involved in beta-glucan degradation and also function biosynthetically as a transglycosylase. The sequence is that of Probable glucan endo-1,3-beta-glucosidase eglC (eglC) from Aspergillus oryzae (strain ATCC 42149 / RIB 40) (Yellow koji mold).